The chain runs to 573 residues: Flagellin B (573 aa).

It belongs to the bacterial flagellin family. As to quaternary structure, heteromer of FlaA and FlaB. A flagellar filament composed exclusively of FlaA is indistinguishable in length from that of the wild-type and shows a slight reduction in motility. The flagellar filament composed exclusively of the FlaB is severely truncated in length and greatly reduced in motility. Thus, while both flagellins are not necessary for motility, both are required for a fully active flagellar filament.

The protein resides in the secreted. It is found in the bacterial flagellum. Flagellin is the subunit protein which polymerizes to form the filaments of bacterial flagella. The protein is Flagellin B (flaB) of Campylobacter coli.